The sequence spans 639 residues: Serine/threonine-protein kinase PAK mbt (639 aa).

The region spanning 11 to 24 (ISMPSNFEHRVHTG) is the CRIB domain. The segment at 25-367 (FDKRENKYVG…VVSAGDPREN (343 aa)) is linker. Disordered regions lie at residues 79–195 (HHNN…SLLY) and 222–345 (RSNL…QDQR). 4 stretches are compositionally biased toward low complexity: residues 91–129 (NSSS…ETGG), 138–159 (VARS…ANVP), 227–241 (PPSG…QTSP), and 274–295 (QQQQ…NPLH). The segment covering 296–308 (PHAHPHPHHHQHL) has biased composition (basic residues). The span at 309-331 (AKSASRASSSSGGASSAAQQASG) shows a compositional bias: low complexity. One can recognise a Protein kinase domain in the interval 368 to 619 (LDHFNKIGEG…AAELLAHPFL (252 aa)). Residues 374–382 (IGEGSTGTV) and lysine 397 contribute to the ATP site. The Proton acceptor role is filled by aspartate 487. Residue serine 521 is modified to Phosphoserine. At threonine 525 the chain carries Phosphothreonine.

It belongs to the protein kinase superfamily. STE Ser/Thr protein kinase family. STE20 subfamily. In terms of assembly, interacts tightly with GTP-bound but not GDP-bound Cdc42 and weakly with Rac1. It depends on Mg(2+) as a cofactor. Post-translationally, autophosphorylated when activated by Cdc42. In terms of tissue distribution, expressed in adult brain and eye. High levels detected in developing photoreceptor cells and future bristle cells, and lower levels in cone and pigment cells, as detected in third instar eye imaginal disks (at protein level).

The protein resides in the cell junction. The protein localises to the adherens junction. It is found in the cell membrane. It carries out the reaction L-seryl-[protein] + ATP = O-phospho-L-seryl-[protein] + ADP + H(+). The enzyme catalyses L-threonyl-[protein] + ATP = O-phospho-L-threonyl-[protein] + ADP + H(+). Involved in neurogenesis of the adult central nervous system, and together with Cdc42, regulates photoreceptor cell morphogenesis. Phosphorylates exogenous substrates when activated by Cdc42. The protein is Serine/threonine-protein kinase PAK mbt of Drosophila melanogaster (Fruit fly).